Consider the following 583-residue polypeptide: Probable phosphoglucomutase, cytoplasmic 1 (583 aa).

Positions 24 and 123 each coordinate alpha-D-glucose 1,6-bisphosphate. The Phosphoserine intermediate role is filled by S123. Residues S123, D299, D301, and D303 each contribute to the Mg(2+) site. S123 carries the phosphoserine modification. Residues D303, R304, T367, E386, S388, and K399 each contribute to the alpha-D-glucose 1,6-bisphosphate site.

It belongs to the phosphohexose mutase family. As to quaternary structure, monomer. The cofactor is Mg(2+).

It localises to the cytoplasm. It catalyses the reaction alpha-D-glucose 1-phosphate = alpha-D-glucose 6-phosphate. It carries out the reaction O-phospho-L-seryl-[protein] + alpha-D-glucose 1-phosphate = alpha-D-glucose 1,6-bisphosphate + L-seryl-[protein]. The enzyme catalyses alpha-D-glucose 1,6-bisphosphate + L-seryl-[protein] = O-phospho-L-seryl-[protein] + alpha-D-glucose 6-phosphate. In terms of biological role, catalyzes the reversible isomerization of alpha-D-glucose 1-phosphate to alpha-D-glucose 6-phosphate. The mechanism proceeds via the intermediate compound alpha-D-glucose 1,6-bisphosphate. This enzyme participates in both the breakdown and synthesis of glucose. This Arabidopsis thaliana (Mouse-ear cress) protein is Probable phosphoglucomutase, cytoplasmic 1.